A 357-amino-acid chain; its full sequence is Phosphoserine aminotransferase (357 aa).

L-glutamate is bound at residue arginine 41. Pyridoxal 5'-phosphate-binding positions include 75-76, tryptophan 100, threonine 150, aspartate 170, and glutamine 193; that span reads GT. Residue lysine 194 is modified to N6-(pyridoxal phosphate)lysine. A pyridoxal 5'-phosphate-binding site is contributed by 234 to 235; the sequence is NT.

The protein belongs to the class-V pyridoxal-phosphate-dependent aminotransferase family. SerC subfamily. Homodimer. Pyridoxal 5'-phosphate is required as a cofactor.

The protein localises to the cytoplasm. The enzyme catalyses O-phospho-L-serine + 2-oxoglutarate = 3-phosphooxypyruvate + L-glutamate. The catalysed reaction is 4-(phosphooxy)-L-threonine + 2-oxoglutarate = (R)-3-hydroxy-2-oxo-4-phosphooxybutanoate + L-glutamate. Its pathway is amino-acid biosynthesis; L-serine biosynthesis; L-serine from 3-phospho-D-glycerate: step 2/3. Catalyzes the reversible conversion of 3-phosphohydroxypyruvate to phosphoserine and of 3-hydroxy-2-oxo-4-phosphonooxybutanoate to phosphohydroxythreonine. This Lactiplantibacillus plantarum (strain ATCC BAA-793 / NCIMB 8826 / WCFS1) (Lactobacillus plantarum) protein is Phosphoserine aminotransferase.